Consider the following 228-residue polypeptide: 30 kDa heat shock protein (228 aa).

Disordered stretches follow at residues 34 to 53 (EVQG…PTRT), 117 to 136 (KGEP…DVDE), and 144 to 174 (TATG…APAE). Positions 49–228 (QPTRTFSPKF…KHETIRIAIN (180 aa)) constitute a sHSP domain. Residues 144–158 (TATGANNQNNQQVAQ) are compositionally biased toward low complexity.

This sequence belongs to the small heat shock protein (HSP20) family.

It localises to the cytoplasm. This is 30 kDa heat shock protein (hsp30) from Neurospora crassa (strain ATCC 24698 / 74-OR23-1A / CBS 708.71 / DSM 1257 / FGSC 987).